The chain runs to 346 residues: 3-keto-steroid reductase ERG27 (346 aa).

Positions 19, 42, and 48 each coordinate NADP(+). Catalysis depends on proton donor residues Ser-182 and Tyr-205. NADP(+)-binding residues include Tyr-205, Lys-209, and Ser-241. Lys-209 functions as the Lowers pKa of active site Tyr in the catalytic mechanism. The chain crosses the membrane as a helical span at residues 242 to 262; it reads FSFFQYLNVFTYYGMLFLFYL. An N-linked (GlcNAc...) asparagine glycan is attached at Asn-272.

Belongs to the short-chain dehydrogenases/reductases (SDR) family. ERG27 subfamily. In terms of assembly, heterotetramer of ERG25, ERG26, ERG27 and ERG28. ERG28 acts as a scaffold to tether ERG27 and other 4,4-demethylation-related enzymes, forming a demethylation enzyme complex, in the endoplasmic reticulum. Interacts with ERG25 and ERG28. Also interacts with ERG7, but only in lipid particles.

The protein resides in the endoplasmic reticulum membrane. It localises to the lipid droplet. It carries out the reaction 3-dehydro-4alpha-methylzymosterol + NADPH + H(+) = 4alpha-methylzymosterol + NADP(+). The protein operates within steroid biosynthesis; zymosterol biosynthesis; zymosterol from lanosterol: step 5/6. In terms of biological role, 3-keto-steroid reductase; part of the third module of ergosterol biosynthesis pathway that includes the late steps of the pathway. ERG27 is a catalytic component of the C-4 demethylation complex that catalyzes the reduction of the keto group on the C-3. The third module or late pathway involves the ergosterol synthesis itself through consecutive reactions that mainly occur in the endoplasmic reticulum (ER) membrane. Firstly, the squalene synthase ERG9 catalyzes the condensation of 2 farnesyl pyrophosphate moieties to form squalene, which is the precursor of all steroids. Squalene synthase is crucial for balancing the incorporation of farnesyl diphosphate (FPP) into sterol and nonsterol isoprene synthesis. Secondly, the squalene epoxidase ERG1 catalyzes the stereospecific oxidation of squalene to (S)-2,3-epoxysqualene, which is considered to be a rate-limiting enzyme in steroid biosynthesis. Then, the lanosterol synthase ERG7 catalyzes the cyclization of (S)-2,3 oxidosqualene to lanosterol, a reaction that forms the sterol core. In the next steps, lanosterol is transformed to zymosterol through a complex process involving various demethylation, reduction and desaturation reactions. The lanosterol 14-alpha-demethylase ERG11 (also known as CYP51) catalyzes C14-demethylation of lanosterol to produce 4,4'-dimethyl cholesta-8,14,24-triene-3-beta-ol, which is critical for ergosterol biosynthesis. The C-14 reductase ERG24 reduces the C14=C15 double bond of 4,4-dimethyl-cholesta-8,14,24-trienol to produce 4,4-dimethyl-cholesta-8,24-dienol. 4,4-dimethyl-cholesta-8,24-dienol is substrate of the C-4 demethylation complex ERG25-ERG26-ERG27 in which ERG25 catalyzes the three-step monooxygenation required for the demethylation of 4,4-dimethyl and 4alpha-methylsterols, ERG26 catalyzes the oxidative decarboxylation that results in a reduction of the 3-beta-hydroxy group at the C-3 carbon to an oxo group, and ERG27 is responsible for the reduction of the keto group on the C-3. ERG28 has a role as a scaffold to help anchor ERG25, ERG26 and ERG27 to the endoplasmic reticulum and ERG29 regulates the activity of the iron-containing C4-methylsterol oxidase ERG25. Then, the sterol 24-C-methyltransferase ERG6 catalyzes the methyl transfer from S-adenosyl-methionine to the C-24 of zymosterol to form fecosterol. The C-8 sterol isomerase ERG2 catalyzes the reaction which results in unsaturation at C-7 in the B ring of sterols and thus converts fecosterol to episterol. The sterol-C5-desaturase ERG3 then catalyzes the introduction of a C-5 double bond in the B ring to produce 5-dehydroepisterol. The C-22 sterol desaturase ERG5 further converts 5-dehydroepisterol into ergosta-5,7,22,24(28)-tetraen-3beta-ol by forming the C-22(23) double bond in the sterol side chain. Finally, ergosta-5,7,22,24(28)-tetraen-3beta-ol is substrate of the C-24(28) sterol reductase ERG4 to produce ergosterol. Its function is as follows. Facilitates the association of ERG7 with lipid particles preventing its digestion in the endoplasmic reticulum and the lipid particles. The polypeptide is 3-keto-steroid reductase ERG27 (Candida albicans (Yeast)).